The following is a 203-amino-acid chain: High frequency lysogenization protein HflD homolog (203 aa).

Belongs to the HflD family.

It localises to the cytoplasm. Its subcellular location is the cell inner membrane. The protein is High frequency lysogenization protein HflD homolog of Dichelobacter nodosus (strain VCS1703A).